Reading from the N-terminus, the 330-residue chain is DNA-directed RNA polymerase subunit alpha (330 aa).

The segment at 1–231 (MQTNLLKPKT…EQLAVFAQLE (231 aa)) is alpha N-terminal domain (alpha-NTD). The tract at residues 250-330 (FDPILLRPVD…SWPPAGLDKR (81 aa)) is alpha C-terminal domain (alpha-CTD).

This sequence belongs to the RNA polymerase alpha chain family. In terms of assembly, homodimer. The RNAP catalytic core consists of 2 alpha, 1 beta, 1 beta' and 1 omega subunit. When a sigma factor is associated with the core the holoenzyme is formed, which can initiate transcription.

The enzyme catalyses RNA(n) + a ribonucleoside 5'-triphosphate = RNA(n+1) + diphosphate. Functionally, DNA-dependent RNA polymerase catalyzes the transcription of DNA into RNA using the four ribonucleoside triphosphates as substrates. This chain is DNA-directed RNA polymerase subunit alpha, found in Polaromonas naphthalenivorans (strain CJ2).